Consider the following 270-residue polypeptide: UPF0354 protein BCAH820_4810 (270 aa).

This sequence belongs to the UPF0354 family.

The chain is UPF0354 protein BCAH820_4810 from Bacillus cereus (strain AH820).